The primary structure comprises 226 residues: ATP synthase F(0) complex subunit a (226 aa).

6 helical membrane passes run 12–32 (PTMMGLPIVILIVLFPSILFP), 68–88 (WALMLISLILFIGSTNLLGLL), 97–117 (QLSMNLGMAIPLWAGTVITGF), 138–158 (IPMLVIIETISLFIQPMALAV), 164–184 (ITAGHLLIHLIGGATLALMDI), and 189–209 (AFITFIVLILLTILEFAVALI).

This sequence belongs to the ATPase A chain family. Component of the ATP synthase complex composed at least of ATP5F1A/subunit alpha, ATP5F1B/subunit beta, ATP5MC1/subunit c (homooctomer), MT-ATP6/subunit a, MT-ATP8/subunit 8, ATP5ME/subunit e, ATP5MF/subunit f, ATP5MG/subunit g, ATP5MK/subunit k, ATP5MJ/subunit j, ATP5F1C/subunit gamma, ATP5F1D/subunit delta, ATP5F1E/subunit epsilon, ATP5PF/subunit F6, ATP5PB/subunit b, ATP5PD/subunit d, ATP5PO/subunit OSCP. ATP synthase complex consists of a soluble F(1) head domain (subunits alpha(3) and beta(3)) - the catalytic core - and a membrane F(0) domain - the membrane proton channel (subunits c, a, 8, e, f, g, k and j). These two domains are linked by a central stalk (subunits gamma, delta, and epsilon) rotating inside the F1 region and a stationary peripheral stalk (subunits F6, b, d, and OSCP). Interacts with DNAJC30; interaction is direct.

The protein localises to the mitochondrion inner membrane. It catalyses the reaction H(+)(in) = H(+)(out). In terms of biological role, subunit a, of the mitochondrial membrane ATP synthase complex (F(1)F(0) ATP synthase or Complex V) that produces ATP from ADP in the presence of a proton gradient across the membrane which is generated by electron transport complexes of the respiratory chain. ATP synthase complex consist of a soluble F(1) head domain - the catalytic core - and a membrane F(1) domain - the membrane proton channel. These two domains are linked by a central stalk rotating inside the F(1) region and a stationary peripheral stalk. During catalysis, ATP synthesis in the catalytic domain of F(1) is coupled via a rotary mechanism of the central stalk subunits to proton translocation. With the subunit c (ATP5MC1), forms the proton-conducting channel in the F(0) domain, that contains two crucial half-channels (inlet and outlet) that facilitate proton movement from the mitochondrial intermembrane space (IMS) into the matrix. Protons are taken up via the inlet half-channel and released through the outlet half-channel, following a Grotthuss mechanism. In Halichoerus grypus (Gray seal), this protein is ATP synthase F(0) complex subunit a.